We begin with the raw amino-acid sequence, 92 residues long: Progonadoliberin-1 (92 aa).

Residues 1-23 (MEKSRKILVGVLLFTASVAICLA) form the signal peptide. Pyrrolidone carboxylic acid is present on glutamine 24. Position 33 is a glycine amide (glycine 33).

This sequence belongs to the GnRH family.

It localises to the secreted. Its function is as follows. Stimulates the secretion of gonadotropins. This chain is Progonadoliberin-1 (GNRH1), found in Gallus gallus (Chicken).